Reading from the N-terminus, the 456-residue chain is Phospholipase A1 member A (456 aa).

The N-terminal stretch at 1–25 (MPPGPWESCFWVGGLLLWLSVGSSG) is a signal peptide. S166 serves as the catalytic Nucleophile. The Charge relay system role is filled by D190. C245 and C258 are disulfide-bonded. H260 serves as the catalytic Charge relay system. 2 cysteine pairs are disulfide-bonded: C282–C293 and C296–C304. N-linked (GlcNAc...) asparagine glycosylation is present at N365.

The protein belongs to the AB hydrolase superfamily. Lipase family.

It is found in the secreted. The catalysed reaction is a 1,2-diacyl-sn-glycero-3-phospho-L-serine + H2O = a 2-acyl-sn-glycero-3-phospho-L-serine + a fatty acid + H(+). It carries out the reaction 1,2-di-(9Z)-octadecenoyl-sn-glycero-3-phospho-L-serine + H2O = 2-(9Z-octadecenoyl)-sn-glycero-3-phospho-L-serine + (9Z)-octadecenoate + H(+). It catalyses the reaction 1-hexadecanoyl-2-(5Z,8Z,11Z,14Z-eicosatetraenoyl)-sn-glycero-3-phospho-L-serine + H2O = 2-(5Z,8Z,11Z,14Z)-eicosatetraenoyl-sn-glycero-3-phospho-L-serine + hexadecanoate + H(+). The enzyme catalyses a 1-acyl-sn-glycero-3-phospho-L-serine + H2O = sn-glycero-3-phospho-L-serine + a fatty acid + H(+). The catalysed reaction is 1-(9Z-octadecenoyl)-sn-glycero-3-phospho-L-serine + H2O = sn-glycero-3-phospho-L-serine + (9Z)-octadecenoate + H(+). Its function is as follows. Hydrolyzes the ester bond of the acyl group attached at the sn-1 position of phosphatidylserines (phospholipase A1 activity) and 1-acyl-2-lysophosphatidylserines (lysophospholipase activity) in the pathway of phosphatidylserines acyl chain remodeling. Cleaves phosphatidylserines exposed on the outer leaflet of the plasma membrane of apoptotic cells producing 2-acyl-1-lysophosphatidylserines, which in turn enhance mast cell activation and histamine production. Has no activity toward other glycerophospholipids including phosphatidylcholines, phosphatidylethanolamines, phosphatidic acids or phosphatidylinositols, or glycerolipids such as triolein. In Pongo abelii (Sumatran orangutan), this protein is Phospholipase A1 member A (PLA1A).